A 187-amino-acid polypeptide reads, in one-letter code: Ribosome-recycling factor (187 aa).

The protein belongs to the RRF family.

The protein localises to the cytoplasm. Responsible for the release of ribosomes from messenger RNA at the termination of protein biosynthesis. May increase the efficiency of translation by recycling ribosomes from one round of translation to another. This chain is Ribosome-recycling factor, found in Nitrosococcus oceani (strain ATCC 19707 / BCRC 17464 / JCM 30415 / NCIMB 11848 / C-107).